A 196-amino-acid chain; its full sequence is Imidazoleglycerol-phosphate dehydratase (196 aa).

This sequence belongs to the imidazoleglycerol-phosphate dehydratase family.

The protein resides in the cytoplasm. It carries out the reaction D-erythro-1-(imidazol-4-yl)glycerol 3-phosphate = 3-(imidazol-4-yl)-2-oxopropyl phosphate + H2O. The protein operates within amino-acid biosynthesis; L-histidine biosynthesis; L-histidine from 5-phospho-alpha-D-ribose 1-diphosphate: step 6/9. This chain is Imidazoleglycerol-phosphate dehydratase, found in Dehalococcoides mccartyi (strain ATCC BAA-2266 / KCTC 15142 / 195) (Dehalococcoides ethenogenes (strain 195)).